The following is a 58-amino-acid chain: MAHKFEIYKDKAGEYRVRFKYNSEVMFSTEGYSTKAGAQNAIDSIKKNGPNAPVEDNS.

The protein belongs to the UPF0339 family.

The chain is UPF0339 protein Msl4696 from Mesorhizobium japonicum (strain LMG 29417 / CECT 9101 / MAFF 303099) (Mesorhizobium loti (strain MAFF 303099)).